A 144-amino-acid chain; its full sequence is Large ribosomal subunit protein uL16 (144 aa).

This sequence belongs to the universal ribosomal protein uL16 family. As to quaternary structure, part of the 50S ribosomal subunit.

Its function is as follows. Binds 23S rRNA and is also seen to make contacts with the A and possibly P site tRNAs. The chain is Large ribosomal subunit protein uL16 from Levilactobacillus brevis (strain ATCC 367 / BCRC 12310 / CIP 105137 / JCM 1170 / LMG 11437 / NCIMB 947 / NCTC 947) (Lactobacillus brevis).